Here is a 186-residue protein sequence, read N- to C-terminus: Protein GrpE (186 aa).

This sequence belongs to the GrpE family. In terms of assembly, homodimer.

The protein resides in the cytoplasm. In terms of biological role, participates actively in the response to hyperosmotic and heat shock by preventing the aggregation of stress-denatured proteins, in association with DnaK and GrpE. It is the nucleotide exchange factor for DnaK and may function as a thermosensor. Unfolded proteins bind initially to DnaJ; upon interaction with the DnaJ-bound protein, DnaK hydrolyzes its bound ATP, resulting in the formation of a stable complex. GrpE releases ADP from DnaK; ATP binding to DnaK triggers the release of the substrate protein, thus completing the reaction cycle. Several rounds of ATP-dependent interactions between DnaJ, DnaK and GrpE are required for fully efficient folding. This is Protein GrpE from Novosphingobium aromaticivorans (strain ATCC 700278 / DSM 12444 / CCUG 56034 / CIP 105152 / NBRC 16084 / F199).